A 392-amino-acid polypeptide reads, in one-letter code: Esterase EstB (392 aa).

Ser-75 serves as the catalytic Acyl-ester intermediate.

It belongs to the class-A beta-lactamase family.

It localises to the cytoplasm. Its activity is regulated as follows. Strongly inhibited by eserin, NaF, HgCl2, SDS and Triton X-100. Its function is as follows. Acts on short-chain (C4-C6) fatty acid esters and triglycerides, including tertiary alcohol esters. Activity on p-nitrophenyl esters is generally higher than on o-nitrophenyl esters. Lacks beta-lactamase activity; it hydrolyzes the ester bond of cephalosporin substrates but there is no opening of the beta-lactam ring observed. The polypeptide is Esterase EstB (estB) (Burkholderia gladioli (Pseudomonas marginata)).